Reading from the N-terminus, the 32-residue chain is MSDINATCLPAWLALCPCVGDDVNPTLTRGGT.

The propeptide occupies 1–10 (MSDINATCLP). The cyclopeptide (Ala-Pro) cross-link spans 11–17 (AWLALCP). The propeptide occupies 18-32 (CVGDDVNPTLTRGGT).

It belongs to the MSDIN fungal toxin family. In terms of processing, processed by the macrocyclase-peptidase enzyme POPB to yield a toxic cyclic heptapeptide. POPB first removes 10 residues from the N-terminus. Conformational trapping of the remaining peptide forces the enzyme to release this intermediate rather than proceed to macrocyclization. The enzyme rebinds the remaining peptide in a different conformation and catalyzes macrocyclization of the N-terminal 7 residues.

Functionally, probable toxin that belongs to the MSDIN-like toxin family responsible for a large number of food poisoning cases and deaths. The chain is MSDIN-like toxin proprotein 1 from Amanita fuligineoides.